Consider the following 210-residue polypeptide: Endonuclease III (210 aa).

The 20-residue stretch at 108–127 (FKALIKLPGVGRKTANVVLN) folds into the HhH domain. Positions 187, 194, 197, and 203 each coordinate [4Fe-4S] cluster.

It belongs to the Nth/MutY family. [4Fe-4S] cluster serves as cofactor.

It catalyses the reaction 2'-deoxyribonucleotide-(2'-deoxyribose 5'-phosphate)-2'-deoxyribonucleotide-DNA = a 3'-end 2'-deoxyribonucleotide-(2,3-dehydro-2,3-deoxyribose 5'-phosphate)-DNA + a 5'-end 5'-phospho-2'-deoxyribonucleoside-DNA + H(+). Functionally, DNA repair enzyme that has both DNA N-glycosylase activity and AP-lyase activity. The DNA N-glycosylase activity releases various damaged pyrimidines from DNA by cleaving the N-glycosidic bond, leaving an AP (apurinic/apyrimidinic) site. The AP-lyase activity cleaves the phosphodiester bond 3' to the AP site by a beta-elimination, leaving a 3'-terminal unsaturated sugar and a product with a terminal 5'-phosphate. This chain is Endonuclease III, found in Rickettsia conorii (strain ATCC VR-613 / Malish 7).